Reading from the N-terminus, the 192-residue chain is Small ribosomal subunit protein uS5 (192 aa).

In terms of domain architecture, S5 DRBM spans 20–83 (FVDRLVHINR…EAAKRGLIRV (64 aa)). The disordered stretch occupies residues 165-192 (ARRGLKVSALQARRRDAEPGSADSADAA).

Belongs to the universal ribosomal protein uS5 family. As to quaternary structure, part of the 30S ribosomal subunit. Contacts proteins S4 and S8.

Functionally, with S4 and S12 plays an important role in translational accuracy. Located at the back of the 30S subunit body where it stabilizes the conformation of the head with respect to the body. This is Small ribosomal subunit protein uS5 from Methylobacterium sp. (strain 4-46).